The sequence spans 502 residues: Packaging protein 1 (502 aa).

The disordered stretch occupies residues E99–S122. G226–S233 contributes to the ATP binding site. Residues R495–K502 are DNA-binding.

The protein belongs to the adenoviridae packaging protein 1 family. In terms of assembly, homodimer. Part of a genome packaging complex composed of packaging proteins 1, 2 and 3; this complex specifically binds to the packaging sequence on the left end of viral genomic DNA and performs packaging of the viral genome. Interacts with protein 33K.

It localises to the virion. Its subcellular location is the host nucleus. The protein localises to the host nucleoplasm. The protein resides in the host nucleolus. In terms of biological role, component of the packaging machinery which encapsidates the viral DNA into preformed capsids and transcriptional activator of the viral major late promoter (MLP). Binds, along with packaging proteins 2 and 3, to the specific packaging sequence on the left end of viral genomic DNA and displays ATPase activity thereby providing the power stroke of the packaging machinery. The activity of packaging protein IVa2 is stimulated by protein 33K which acts as a terminase. May be the protein that pumps DNA into the capsid powered by ATP hydrolysis. Specifically binds to the 5'-CG-3' nucleotides of the repeats making up the packaging sequence. Component of the DEF-A and DEF-B transcription factors that bind downstream elements of the major late promoter (MLP), and stimulate transcription from the MLP after initiation of viral DNA replication. DEF-A is a heterodimer packaging proteins 1 and 2 and DEF-B is a homodimer of packaging protein 1. The chain is Packaging protein 1 from Canis lupus familiaris (Dog).